The chain runs to 347 residues: 4-hydroxy-2-oxovalerate aldolase (347 aa).

Residues 11 to 262 (PVVVDTTLRD…NPGLDVFKLL (252 aa)) enclose the Pyruvate carboxyltransferase domain. 19–20 (RD) is a substrate binding site. Aspartate 20 provides a ligand contact to Mn(2+). Residue histidine 23 is the Proton acceptor of the active site. The substrate site is built by serine 173 and histidine 201. Positions 201 and 203 each coordinate Mn(2+). Tyrosine 292 serves as a coordination point for substrate.

The protein belongs to the 4-hydroxy-2-oxovalerate aldolase family. As to quaternary structure, homodimer. Can also form a heterotetramer composed of two aldolase (TTHB246) and two dehydrogenase (TTHB247) subunits. Upon complex formation, the aldolase shows a 5-fold increase in substrate affinity, while the dehydrogenase shows a 3-fold decrease; the kcat values of each enzyme are reduced by 2-fold when they are in a complex. It depends on Co(2+) as a cofactor. Ni(2+) serves as cofactor. The cofactor is Mn(2+).

The catalysed reaction is (S)-4-hydroxy-2-oxopentanoate = acetaldehyde + pyruvate. The enzyme catalyses (S)-4-hydroxy-2-oxohexanoate = propanal + pyruvate. Its activity is regulated as follows. Appears to be allosterically activated by NADH. Its function is as follows. Catalyzes the retro-aldol cleavage of both 4-hydroxy-2-oxopentanoate (HOPA) and 4-hydroxy-2-oxohexanoate (HOHA) to pyruvate and acetaldehyde or propanaldehyde, respectively. The aldehydes produced by this reaction are directly channeled to the dehydrogenase TTHB247, ensuring that these toxic aldehydes are sequestered from cellular components. Is involved in the meta-cleavage pathway for the degradation of aromatic compounds. Appears to be stereospecific since it can cleave (4S)-4-hydroxy-2-oxopentanoate but not the (4R) isomer. Is not able to catalyze the aldol addition of 2-oxobutyrate with acetaldehyde; this indicates that the enzyme is specific for pyruvate as the carbonyl donor. This Thermus thermophilus (strain ATCC 27634 / DSM 579 / HB8) protein is 4-hydroxy-2-oxovalerate aldolase.